The following is a 404-amino-acid chain: Probable tRNA sulfurtransferase (404 aa).

A THUMP domain is found at 61-166; that stretch reads EAVSERLKDV…SGYSYIMCDE (106 aa). Residues 184–185, 209–210, R266, G288, and Q297 contribute to the ATP site; these read LL and HF.

Belongs to the ThiI family.

Its subcellular location is the cytoplasm. The catalysed reaction is [ThiI sulfur-carrier protein]-S-sulfanyl-L-cysteine + a uridine in tRNA + 2 reduced [2Fe-2S]-[ferredoxin] + ATP + H(+) = [ThiI sulfur-carrier protein]-L-cysteine + a 4-thiouridine in tRNA + 2 oxidized [2Fe-2S]-[ferredoxin] + AMP + diphosphate. It catalyses the reaction [ThiS sulfur-carrier protein]-C-terminal Gly-Gly-AMP + S-sulfanyl-L-cysteinyl-[cysteine desulfurase] + AH2 = [ThiS sulfur-carrier protein]-C-terminal-Gly-aminoethanethioate + L-cysteinyl-[cysteine desulfurase] + A + AMP + 2 H(+). It functions in the pathway cofactor biosynthesis; thiamine diphosphate biosynthesis. Its function is as follows. Catalyzes the ATP-dependent transfer of a sulfur to tRNA to produce 4-thiouridine in position 8 of tRNAs, which functions as a near-UV photosensor. Also catalyzes the transfer of sulfur to the sulfur carrier protein ThiS, forming ThiS-thiocarboxylate. This is a step in the synthesis of thiazole, in the thiamine biosynthesis pathway. The sulfur is donated as persulfide by IscS. In Bacillus cereus (strain ZK / E33L), this protein is Probable tRNA sulfurtransferase.